A 210-amino-acid chain; its full sequence is Putative protein-lysine deacylase ABHD14B (210 aa).

Residue Ala2 is modified to N-acetylalanine. Position 91 is a phosphoserine (Ser91). Active-site charge relay system residues include Ser111, Asp162, and His188.

It belongs to the AB hydrolase superfamily. ABHD14 family. May interact with TAF1. In terms of tissue distribution, ubiquitous. Detected in spleen, thymus, prostate, testis, ovary, small intestine, colon, peripheral blood leukocyte, heart, placenta, lung, liver, skeletal muscle, pancreas and kidney.

The protein localises to the cytoplasm. It localises to the nucleus. It catalyses the reaction L-lysyl-[protein] + acetyl-CoA = N(6)-acetyl-L-lysyl-[protein] + CoA + H(+). Acts as an atypical protein-lysine deacetylase in vitro. Catalyzes the deacetylation of lysine residues using CoA as substrate, generating acetyl-CoA and the free amine of protein-lysine residues. Additional experiments are however required to confirm the protein-lysine deacetylase activity in vivo. Has hydrolase activity towards various surrogate p-nitrophenyl (pNp) substrates, such as pNp-butyrate, pNp-acetate and pNp-octanoate in vitro, with a strong preference for pNp-acetate. May activate transcription. In Homo sapiens (Human), this protein is Putative protein-lysine deacylase ABHD14B.